Here is a 1023-residue protein sequence, read N- to C-terminus: 2-oxoglutarate dehydrogenase complex component E1 (1023 aa).

A mitochondrion-targeting transit peptide spans 1-40 (MFHLRTCAAKLRPLTASQTVKTFSQNRPAAARTFQQIRCY). K74 carries the N6-succinyllysine modification. Residue S100 is modified to Phosphoserine. The Ca(2+) site is built by H143, D156, and D158. R312 contacts thiamine diphosphate. An N6-acetyllysine modification is found at K401. Thiamine diphosphate contacts are provided by D411, N444, and I446. D411, N444, and I446 together coordinate Mg(2+). K534 is covalently cross-linked (Glycyl lysine isopeptide (Lys-Gly) (interchain with G-Cter in ubiquitin)). K564 carries the N6-succinyllysine modification. Q676 provides a ligand contact to thiamine diphosphate. The residue at position 970 (K970) is an N6-acetyllysine.

It belongs to the alpha-ketoglutarate dehydrogenase family. In terms of assembly, homodimer. The 2-oxoglutarate dehydrogenase complex is composed of OGDH (2-oxoglutarate dehydrogenase; E1), DLST (dihydrolipoamide succinyltransferase; E2), DLD (dihydrolipoamide dehydrogenase; E3) and the assembly factor KGD4. It contains multiple copies of the three enzymatic components (E1, E2 and E3). In the nucleus, the 2-oxoglutarate dehydrogenase complex associates with KAT2A. Interacts with ABHD11; this interaction maintains the functional lipoylation of the 2-oxoglutarate dehydrogenase complex. Thiamine diphosphate serves as cofactor. It depends on Mg(2+) as a cofactor.

The protein localises to the mitochondrion. It is found in the nucleus. The enzyme catalyses N(6)-[(R)-lipoyl]-L-lysyl-[protein] + 2-oxoglutarate + H(+) = N(6)-[(R)-S(8)-succinyldihydrolipoyl]-L-lysyl-[protein] + CO2. Calcium ions and ADP stimulate, whereas ATP and NADH reduce catalytic activity. In terms of biological role, 2-oxoglutarate dehydrogenase (E1o) component of the 2-oxoglutarate dehydrogenase complex (OGDHC). Participates in the first step, rate limiting for the overall conversion of 2-oxoglutarate to succinyl-CoA and CO(2) catalyzed by the whole OGDHC. Catalyzes the irreversible decarboxylation of 2-oxoglutarate (alpha-ketoglutarate) via the thiamine diphosphate (ThDP) cofactor and subsequent transfer of the decarboxylated acyl intermediate on an oxidized dihydrolipoyl group that is covalently amidated to the E2 enzyme (dihydrolipoyllysine-residue succinyltransferase or DLST). Plays a key role in the Krebs (citric acid) cycle, which is a common pathway for oxidation of fuel molecules, including carbohydrates, fatty acids, and amino acids. Can catalyze the decarboxylation of 2-oxoadipate in vitro, but at a much lower rate than 2-oxoglutarate. Mainly active in the mitochondrion. A fraction of the 2-oxoglutarate dehydrogenase complex also localizes in the nucleus and is required for lysine succinylation of histones: associates with KAT2A on chromatin and provides succinyl-CoA to histone succinyltransferase KAT2A. The chain is 2-oxoglutarate dehydrogenase complex component E1 from Pongo abelii (Sumatran orangutan).